A 1005-amino-acid polypeptide reads, in one-letter code: Regulator of telomere elongation helicase 1 homolog (1005 aa).

In terms of domain architecture, Helicase ATP-binding spans 7 to 322 (AGIPVHFPFE…KEMLLELEKA (316 aa)). Position 42–49 (42–49 (SPTGTGKT)) interacts with ATP. [4Fe-4S] cluster is bound by residues cysteine 145, cysteine 163, cysteine 172, and cysteine 208. Residues 251-254 (DEAH) carry the DEAH box motif. Position 876 is a phosphothreonine (threonine 876). Positions 893–917 (NGPLKTEPSEPATTSSSFCPTPAQS) are disordered.

The protein belongs to the helicase family. RAD3/XPD subfamily.

The protein resides in the nucleus. The catalysed reaction is ATP + H2O = ADP + phosphate + H(+). Functionally, a probable ATP-dependent DNA helicase implicated in DNA repair and the maintenance of genomic stability. Acts as an anti-recombinase to counteract toxic recombination and limit crossover during meiosis. Regulates meiotic recombination and crossover homeostasis by physically dissociating strand invasion events and thereby promotes noncrossover repair by meiotic synthesis dependent strand annealing (SDSA) as well as disassembly of D loop recombination intermediates. The chain is Regulator of telomere elongation helicase 1 homolog from Drosophila virilis (Fruit fly).